A 213-amino-acid chain; its full sequence is Holliday junction resolvase RecU (213 aa).

Residues threonine 99, aspartate 101, glutamate 114, and glutamine 133 each coordinate Mg(2+).

The protein belongs to the RecU family. The cofactor is Mg(2+).

It is found in the cytoplasm. It catalyses the reaction Endonucleolytic cleavage at a junction such as a reciprocal single-stranded crossover between two homologous DNA duplexes (Holliday junction).. In terms of biological role, endonuclease that resolves Holliday junction intermediates in genetic recombination. Cleaves mobile four-strand junctions by introducing symmetrical nicks in paired strands. Promotes annealing of linear ssDNA with homologous dsDNA. Required for DNA repair, homologous recombination and chromosome segregation. In Lactococcus lactis subsp. lactis (strain IL1403) (Streptococcus lactis), this protein is Holliday junction resolvase RecU.